A 321-amino-acid polypeptide reads, in one-letter code: Olfactory receptor 51G1 (321 aa).

Over 1-27 (MTILLNSSLQRATFFLTGFQGLEGLHG) the chain is Extracellular. Asparagine 6 carries an N-linked (GlcNAc...) asparagine glycan. A helical transmembrane segment spans residues 28–48 (WISIPFCFIYLTVILGNLTIL). Residues 49 to 56 (HVICTDAT) are Cytoplasmic-facing. The chain crosses the membrane as a helical span at residues 57–77 (LHGPMYYFLGMLAVTDLGLCL). Residues 78–101 (STLPTVLGIFWFDTREIGIPACFT) are Extracellular-facing. The cysteines at positions 99 and 191 are disulfide-linked. A helical membrane pass occupies residues 102–122 (QLFFIHTLSSMESSVLLSMSI). Topologically, residues 123-141 (DRYVAVCNPLHDSTVLTPA) are cytoplasmic. A helical membrane pass occupies residues 142-162 (CIVKMGLSSVLRSALLILPLP). At 163 to 198 (FLLKRFQYCHSHVLAHAYCLHLEIMKLACSSIIVNH) the chain is on the extracellular side. A helical transmembrane segment spans residues 199–219 (IYGLFVVACTVGVDSLLIFLS). The Cytoplasmic portion of the chain corresponds to 220–239 (YALILRTVLSIASHQERLRA). A helical transmembrane segment spans residues 240–260 (LNTCVSHICAVLLFYIPMIGL). Residues 261 to 275 (SLVHRFGEHLPRVVH) are Extracellular-facing. The chain crosses the membrane as a helical span at residues 276-296 (LFMSYVYLLVPPLMNPIIYSI). The Cytoplasmic segment spans residues 297-321 (KTKQIRQRIIKKFQFIKSLRCFWKD).

The protein belongs to the G-protein coupled receptor 1 family.

Its subcellular location is the cell membrane. Functionally, odorant receptor. This Homo sapiens (Human) protein is Olfactory receptor 51G1 (OR51G1).